We begin with the raw amino-acid sequence, 468 residues long: ATP synthase subunit beta (468 aa).

G155–T162 provides a ligand contact to ATP.

This sequence belongs to the ATPase alpha/beta chains family. F-type ATPases have 2 components, CF(1) - the catalytic core - and CF(0) - the membrane proton channel. CF(1) has five subunits: alpha(3), beta(3), gamma(1), delta(1), epsilon(1). CF(0) has three main subunits: a(1), b(2) and c(9-12). The alpha and beta chains form an alternating ring which encloses part of the gamma chain. CF(1) is attached to CF(0) by a central stalk formed by the gamma and epsilon chains, while a peripheral stalk is formed by the delta and b chains.

It localises to the cell membrane. The enzyme catalyses ATP + H2O + 4 H(+)(in) = ADP + phosphate + 5 H(+)(out). Its function is as follows. Produces ATP from ADP in the presence of a proton gradient across the membrane. The catalytic sites are hosted primarily by the beta subunits. The protein is ATP synthase subunit beta of Streptococcus pyogenes serotype M6 (strain ATCC BAA-946 / MGAS10394).